The primary structure comprises 422 residues: Lactose-binding protein (422 aa).

A signal peptide spans 1-28 (MDYSRLLKRSVSAALTAAALLCSTAAFA). The tract at residues 246–277 (SNDGIRALTSGDVASVLRGVWITGTVKSQPDQ) is lactose-binding.

Belongs to the bacterial solute-binding protein 1 family.

It localises to the periplasm. In terms of biological role, part of the binding-protein-dependent transport system for lactose. The protein is Lactose-binding protein (lacE) of Rhizobium radiobacter (Agrobacterium tumefaciens).